A 454-amino-acid chain; its full sequence is tRNA modification GTPase MnmE (454 aa).

Residues Arg23, Glu80, and Lys120 each coordinate (6S)-5-formyl-5,6,7,8-tetrahydrofolate. The region spanning 216–377 (GMKVVIAGRP…LRNHLKQSMG (162 aa)) is the TrmE-type G domain. K(+) is bound at residue Asn226. GTP is bound by residues 226 to 231 (NAGKSS), 245 to 251 (TDIAGTT), 270 to 273 (DTAG), 335 to 338 (NKAD), and 358 to 360 (SAR). Residue Ser230 participates in Mg(2+) binding. Thr245, Ile247, and Thr250 together coordinate K(+). Position 251 (Thr251) interacts with Mg(2+). Lys454 serves as a coordination point for (6S)-5-formyl-5,6,7,8-tetrahydrofolate.

The protein belongs to the TRAFAC class TrmE-Era-EngA-EngB-Septin-like GTPase superfamily. TrmE GTPase family. In terms of assembly, homodimer. Heterotetramer of two MnmE and two MnmG subunits. It depends on K(+) as a cofactor.

It localises to the cytoplasm. In terms of biological role, exhibits a very high intrinsic GTPase hydrolysis rate. Involved in the addition of a carboxymethylaminomethyl (cmnm) group at the wobble position (U34) of certain tRNAs, forming tRNA-cmnm(5)s(2)U34. The chain is tRNA modification GTPase MnmE from Escherichia coli O139:H28 (strain E24377A / ETEC).